A 211-amino-acid polypeptide reads, in one-letter code: Uracil phosphoribosyltransferase (211 aa).

Residues Arg81, Arg106, and 133-141 (DPMLATGNS) each bind 5-phospho-alpha-D-ribose 1-diphosphate. Uracil contacts are provided by residues Ile196 and 201 to 203 (GDA). Asp202 contacts 5-phospho-alpha-D-ribose 1-diphosphate.

This sequence belongs to the UPRTase family. Requires Mg(2+) as cofactor.

It catalyses the reaction UMP + diphosphate = 5-phospho-alpha-D-ribose 1-diphosphate + uracil. It participates in pyrimidine metabolism; UMP biosynthesis via salvage pathway; UMP from uracil: step 1/1. Allosterically activated by GTP. Catalyzes the conversion of uracil and 5-phospho-alpha-D-ribose 1-diphosphate (PRPP) to UMP and diphosphate. The protein is Uracil phosphoribosyltransferase of Myxococcus xanthus (strain DK1622).